Here is a 206-residue protein sequence, read N- to C-terminus: Ribosomal RNA large subunit methyltransferase E (206 aa).

Positions 61, 63, 81, 97, and 122 each coordinate S-adenosyl-L-methionine. K162 functions as the Proton acceptor in the catalytic mechanism.

Belongs to the class I-like SAM-binding methyltransferase superfamily. RNA methyltransferase RlmE family.

It localises to the cytoplasm. It catalyses the reaction uridine(2552) in 23S rRNA + S-adenosyl-L-methionine = 2'-O-methyluridine(2552) in 23S rRNA + S-adenosyl-L-homocysteine + H(+). Specifically methylates the uridine in position 2552 of 23S rRNA at the 2'-O position of the ribose in the fully assembled 50S ribosomal subunit. The chain is Ribosomal RNA large subunit methyltransferase E from Neisseria meningitidis serogroup C / serotype 2a (strain ATCC 700532 / DSM 15464 / FAM18).